The sequence spans 81 residues: ATP synthase subunit c (81 aa).

Helical transmembrane passes span 7–27 and 57–77; these read AASV…PGLG and FAFM…LLFA.

This sequence belongs to the ATPase C chain family. F-type ATPases have 2 components, F(1) - the catalytic core - and F(0) - the membrane proton channel. F(1) has five subunits: alpha(3), beta(3), gamma(1), delta(1), epsilon(1). F(0) has four main subunits: a(1), b(1), b'(1) and c(10-14). The alpha and beta chains form an alternating ring which encloses part of the gamma chain. F(1) is attached to F(0) by a central stalk formed by the gamma and epsilon chains, while a peripheral stalk is formed by the delta, b and b' chains.

Its subcellular location is the cellular thylakoid membrane. Functionally, f(1)F(0) ATP synthase produces ATP from ADP in the presence of a proton or sodium gradient. F-type ATPases consist of two structural domains, F(1) containing the extramembraneous catalytic core and F(0) containing the membrane proton channel, linked together by a central stalk and a peripheral stalk. During catalysis, ATP synthesis in the catalytic domain of F(1) is coupled via a rotary mechanism of the central stalk subunits to proton translocation. Its function is as follows. Key component of the F(0) channel; it plays a direct role in translocation across the membrane. A homomeric c-ring of between 10-14 subunits forms the central stalk rotor element with the F(1) delta and epsilon subunits. The protein is ATP synthase subunit c of Prochlorococcus marinus (strain MIT 9301).